A 341-amino-acid polypeptide reads, in one-letter code: HTH-type transcriptional repressor PurR (341 aa).

Positions 2–56 (ATIKDVAKRANVSTTTVSHVINKTRFVAEETRNAVWAAIKELHYSPSAVARSLKV) constitute an HTH lacI-type domain. Positions 4 to 23 (IKDVAKRANVSTTTVSHVIN) form a DNA-binding region, H-T-H motif. The DNA-binding element occupies 48–56 (SAVARSLKV). Residues Tyr-73, Arg-190, Thr-192, Phe-221, and Asp-275 each coordinate hypoxanthine.

In terms of assembly, homodimer.

It functions in the pathway purine metabolism; purine nucleotide biosynthesis [regulation]. Its function is as follows. Is the main repressor of the genes involved in the de novo synthesis of purine nucleotides, regulating purB, purC, purEK, purF, purHD, purL, purMN and guaBA expression. PurR is allosterically activated to bind its cognate DNA by binding the purine corepressors, hypoxanthine or guanine, thereby effecting transcription repression. In Escherichia coli (strain UTI89 / UPEC), this protein is HTH-type transcriptional repressor PurR.